A 106-amino-acid polypeptide reads, in one-letter code: uncharacterized protein (106 aa).

Transmembrane regions (helical) follow at residues Val-10 to Val-30 and Leu-65 to Tyr-85.

The protein resides in the membrane. This is an uncharacterized protein from Saccharomyces cerevisiae (strain ATCC 204508 / S288c) (Baker's yeast).